We begin with the raw amino-acid sequence, 601 residues long: Elongation factor 4 (601 aa).

The tr-type G domain occupies 2-184; the sequence is DLIRNFSIIA…EMIARVPPPT (183 aa). GTP is bound by residues 14–19 and 131–134; these read DHGKST and NKID.

It belongs to the TRAFAC class translation factor GTPase superfamily. Classic translation factor GTPase family. LepA subfamily.

Its subcellular location is the cell inner membrane. The enzyme catalyses GTP + H2O = GDP + phosphate + H(+). Its function is as follows. Required for accurate and efficient protein synthesis under certain stress conditions. May act as a fidelity factor of the translation reaction, by catalyzing a one-codon backward translocation of tRNAs on improperly translocated ribosomes. Back-translocation proceeds from a post-translocation (POST) complex to a pre-translocation (PRE) complex, thus giving elongation factor G a second chance to translocate the tRNAs correctly. Binds to ribosomes in a GTP-dependent manner. In Polynucleobacter necessarius subsp. necessarius (strain STIR1), this protein is Elongation factor 4.